Consider the following 574-residue polypeptide: MSVASVALSPALEELVNFPGIIGRFGFNLDDPILVFLTIAGSVIPKRVMESDSIASVKLRIQSIKGFFVKKQKLLYDGREVSRNDSQIRDYGLADGKLLHLVIRLSDLQAISVRTVDGKEFELVVERSRNVGYVKQQIASKEKELGIPRDHELTLDGEELDDQRLITDLCQNGDNVIHLLISKSAKVRAKPVGKDFEVFIEDVNHKHNVDGRRGKNISSEAKPKEFFVEPFIVNPEIKLPILLKELISSTLEGLEKGNGPIRSSDGSGGAYFMQDPSGHKYVSVFKPIDEEPMAVNNPHGQPVSVDGEGLKKGTQVGEGAIREVAAYILDYPMTGPRTFPHDQTGFAGVPPTTMVKCLHKDFNHPNGYSFSPENTKIGSLQMFVSNVGSCEDMGYRVFPVDQVHKISVLDIRLANADRHAGNILVSRDGKDGQMVLTPIDHGYCFPNKFEDCTFEWLYWPQAKEPYSSETLEYIKSLDPEKDIELLRFHGWEIPPSCTRVLRISTMLLKKGSAKGLTPFTIGSIMCRETLKEESVIEQIIHDAEAIVPTETTEDEFISTVSAIMDNRLDQYAWN.

Ubiquitin-like domains follow at residues 32 to 109 (PILV…SDLQ) and 110 to 188 (AISV…AKVR). The PI3K/PI4K catalytic domain maps to 257–555 (GNGPIRSSDG…IVPTETTEDE (299 aa)). The G-loop stretch occupies residues 263 to 269 (SSDGSGG). Residues 264-270 (SDGSGGA), lysine 286, and 381-384 (QMFV) each bind ATP. Positions 414–422 (ANADRHAGN) are catalytic loop. The segment at 438–464 (PIDHGYCFPNKFEDCTFEWLYWPQAKE) is activation loop. Position 440 (aspartate 440) interacts with ATP.

Belongs to the PI3/PI4-kinase family. Type II PI4K subfamily.

It catalyses the reaction a 1,2-diacyl-sn-glycero-3-phospho-(1D-myo-inositol) + ATP = a 1,2-diacyl-sn-glycero-3-phospho-(1D-myo-inositol 4-phosphate) + ADP + H(+). In terms of biological role, the phosphorylation of phosphatidylinositol (PI) to PI4P is the first committed step in the generation of phosphatidylinositol 4,5-bisphosphate (PIP2), a precursor of the second messenger inositol 1,4,5-trisphosphate (InsP3). This is Phosphatidylinositol 4-kinase gamma 3 (PI4KG3) from Arabidopsis thaliana (Mouse-ear cress).